Here is a 367-residue protein sequence, read N- to C-terminus: Peroxidase 1 (367 aa).

The signal sequence occupies residues methionine 1–alanine 33. Glutamine 34 carries the pyrrolidone carboxylic acid modification. Cystine bridges form between cysteine 44/cysteine 125, cysteine 77/cysteine 82, cysteine 131/cysteine 335, and cysteine 209/cysteine 244. The Proton acceptor role is filled by histidine 75. Ca(2+) is bound by residues aspartate 76, valine 79, glycine 81, aspartate 83, and serine 85. Residue asparagine 164 is glycosylated (N-linked (GlcNAc...) asparagine). Proline 172 is a substrate binding site. Histidine 202 provides a ligand contact to heme b. Threonine 203 provides a ligand contact to Ca(2+). N-linked (GlcNAc...) asparagine glycosylation is found at asparagine 218 and asparagine 247. Positions 259, 262, and 267 each coordinate Ca(2+). An N-linked (GlcNAc...) asparagine glycan is attached at asparagine 303.

Belongs to the peroxidase family. Classical plant (class III) peroxidase subfamily. Requires heme b as cofactor. Ca(2+) is required as a cofactor. As to expression, expressed in the root tip meristems.

It localises to the secreted. The protein localises to the vacuole. The catalysed reaction is 2 a phenolic donor + H2O2 = 2 a phenolic radical donor + 2 H2O. In terms of biological role, removal of H(2)O(2), oxidation of toxic reductants, biosynthesis and degradation of lignin, suberization, auxin catabolism, response to environmental stresses such as wounding, pathogen attack and oxidative stress. These functions might be dependent on each isozyme/isoform in each plant tissue. This is Peroxidase 1 (PER1) from Zea mays (Maize).